Here is a 335-residue protein sequence, read N- to C-terminus: uncharacterized protein (335 aa).

The ABC transporter domain maps to 21 to 258; that stretch reads VMTSDLRKVY…QNTYHVQGQN (238 aa). Residue 60–67 coordinates ATP; sequence GPNGAGKT.

Belongs to the ABC transporter superfamily.

This is an uncharacterized protein from Nostoc sp. (strain PCC 7120 / SAG 25.82 / UTEX 2576).